The sequence spans 104 residues: Large ribosomal subunit protein bL21 (104 aa).

It belongs to the bacterial ribosomal protein bL21 family. As to quaternary structure, part of the 50S ribosomal subunit. Contacts protein L20.

Its function is as follows. This protein binds to 23S rRNA in the presence of protein L20. In Caldanaerobacter subterraneus subsp. tengcongensis (strain DSM 15242 / JCM 11007 / NBRC 100824 / MB4) (Thermoanaerobacter tengcongensis), this protein is Large ribosomal subunit protein bL21.